Reading from the N-terminus, the 529-residue chain is Bifunctional purine biosynthesis protein PurH (529 aa).

The region spanning 1 to 148 (MQQRRPIRRA…KNHKDVAIVV (148 aa)) is the MGS-like domain.

The protein belongs to the PurH family.

The catalysed reaction is (6R)-10-formyltetrahydrofolate + 5-amino-1-(5-phospho-beta-D-ribosyl)imidazole-4-carboxamide = 5-formamido-1-(5-phospho-D-ribosyl)imidazole-4-carboxamide + (6S)-5,6,7,8-tetrahydrofolate. The enzyme catalyses IMP + H2O = 5-formamido-1-(5-phospho-D-ribosyl)imidazole-4-carboxamide. Its pathway is purine metabolism; IMP biosynthesis via de novo pathway; 5-formamido-1-(5-phospho-D-ribosyl)imidazole-4-carboxamide from 5-amino-1-(5-phospho-D-ribosyl)imidazole-4-carboxamide (10-formyl THF route): step 1/1. It participates in purine metabolism; IMP biosynthesis via de novo pathway; IMP from 5-formamido-1-(5-phospho-D-ribosyl)imidazole-4-carboxamide: step 1/1. The polypeptide is Bifunctional purine biosynthesis protein PurH (Pectobacterium carotovorum subsp. carotovorum (strain PC1)).